A 228-amino-acid chain; its full sequence is MLVRIPQVLNAEQLAMLREQLDHAGDAWVDGRVTAGYSGAPVKFNQQIDERSEAAAQCQHLVLSALERNPLFISAVLPNIVYPPMFNRYSEGMTFGLHVDGGVRLHPHNGRKLRTDVSATLFLSDPASYDGGELQIEDTYGVHSVKLAAGDMVVYPSTSLHQVKPITRGVRVGCFFWIQSLIRDDGQRALLFDMDNAIQTLNQTNADERARRTLVGCYHNLLRQWSDT.

One can recognise a Fe2OG dioxygenase domain in the interval 80–180; sequence IVYPPMFNRY…RVGCFFWIQS (101 aa). Positions 98, 100, and 161 each coordinate Fe cation. R171 lines the 2-oxoglutarate pocket.

Fe(2+) is required as a cofactor. The cofactor is L-ascorbate.

The chain is PKHD-type hydroxylase Rmet_3078 from Cupriavidus metallidurans (strain ATCC 43123 / DSM 2839 / NBRC 102507 / CH34) (Ralstonia metallidurans).